A 2036-amino-acid polypeptide reads, in one-letter code: Bikaverin polyketide synthase bik1 (2036 aa).

An N-terminal acylcarrier protein transacylase domain (SAT) region spans residues 8 to 242 (YVFGDQSTPV…YPAPIYGPYH (235 aa)). In terms of domain architecture, Ketosynthase family 3 (KS3) spans 370–801 (ENKIAIIGFS…GGNTSLLLED (432 aa)). Residues Cys-541, His-676, and His-718 each act as for beta-ketoacyl synthase activity in the active site. Residues 908 to 1209 (FLFTGQGAQE…LASLRRKEDH (302 aa)) are acyl/malonyl transferases. Ser-997 (for acyl/malonyl transferase activity) is an active-site residue. The N-terminal hotdog fold stretch occupies residues 1293–1425 (HNVIEQVHGD…CDVAVENPSS (133 aa)). One can recognise a PKS/mFAS DH domain in the interval 1293–1600 (HNVIEQVHGD…FKKVARKVLE (308 aa)). Residues 1295-1599 (VIEQVHGDKR…TFKKVARKVL (305 aa)) form a product template (PT) domain region. His-1325 functions as the Proton acceptor; for dehydratase activity in the catalytic mechanism. Residues 1452–1600 (SAHMMRRGLL…FKKVARKVLE (149 aa)) are C-terminal hotdog fold. The active-site Proton donor; for dehydratase activity is the Asp-1511. Positions 1628-1654 (VLTPPSTTSHSVGTTSPPEPTESPVGS) are disordered. Residues 1638–1654 (SVGTTSPPEPTESPVGS) are compositionally biased toward low complexity. The region spanning 1653–1730 (GSASGLIQKA…DLKSFLGAND (78 aa)) is the Carrier domain. Ser-1690 is modified (O-(pantetheine 4'-phosphoryl)serine). A disordered region spans residues 1733–1758 (FSSSNSEAESSASSAASTSPSDHGDD). Residues 1734–1753 (SSSNSEAESSASSAASTSPS) show a composition bias toward low complexity. The active-site For thioesterase activity is the Ser-1857.

Its pathway is secondary metabolite biosynthesis. Functionally, polyketide synthase; part of the gene cluster that mediates the biosynthesis of bikaverin, a red pigment also considered as a mycotoxin. The first stage is catalyzed by the polyketide synthase bik1, which catalyzes the formation of the intermediate SMA76a also knowm as pre-bikaverin. FAD-dependent monooxygenase bik2 might then be responsible for the oxidation of pre-bikaverin to oxo-pre-bikaverin which is in turn methylated by the O-methyltransferase bik3 to me-oxo-pre-bikaverin. A further cycle of oxydation and methylation by bik2 and bik3 leads to the final product of bikaverin, via a nor-bikaverin intermediate. The sequence is that of Bikaverin polyketide synthase bik1 from Gibberella fujikuroi (strain CBS 195.34 / IMI 58289 / NRRL A-6831) (Bakanae and foot rot disease fungus).